A 364-amino-acid polypeptide reads, in one-letter code: MNPLLSFKDVSKGFEDVQILNEINIDIEPGYFYTLLGPSGCGKTTILKLIAGFEYPDSGDIIYKDKPIGKMPPNKRKVNTVFQDYALFPHLNVFDNIAYGLKLKKLSKSEIKRKVTEALQLVKLSGYEHRQIQGMSGGQKQRVAIARAIVNEPEILLLDESLSALDLKLRTEMQYLLRELQSRLGITFIFVTHDQEEALALSDYIFVMKDGKIQQFGTPIDIYDEPVNRFVADFIGESNIVHGTMVEDFVVNIYGQNFDCVDMGIKENKKVEVVIRPEDISLVSQNDGLFKAKVDSMLFRGVHYEICCKDRKGYEWVIQSTKKANVGSEVGLYFEPEAIHIMVPGETEEEFDKRIESYEDYHHA.

Positions 5-235 constitute an ABC transporter domain; that stretch reads LSFKDVSKGF…PVNRFVADFI (231 aa). 37-44 provides a ligand contact to ATP; that stretch reads GPSGCGKT.

It belongs to the ABC transporter superfamily. Spermidine/putrescine importer (TC 3.A.1.11.1) family. In terms of assembly, the complex is composed of two ATP-binding proteins (PotA), two transmembrane proteins (PotB and PotC) and a solute-binding protein (PotD).

Its subcellular location is the cell membrane. It carries out the reaction ATP + H2O + polyamine-[polyamine-binding protein]Side 1 = ADP + phosphate + polyamineSide 2 + [polyamine-binding protein]Side 1.. Its function is as follows. Part of the ABC transporter complex PotABCD involved in spermidine/putrescine import. Responsible for energy coupling to the transport system. This is Spermidine/putrescine import ATP-binding protein PotA from Staphylococcus epidermidis (strain ATCC 35984 / DSM 28319 / BCRC 17069 / CCUG 31568 / BM 3577 / RP62A).